We begin with the raw amino-acid sequence, 215 residues long: Small ribosomal subunit protein uS3 (215 aa).

A KH type-2 domain is found at isoleucine 39 to lysine 109.

The protein belongs to the universal ribosomal protein uS3 family. Part of the 30S ribosomal subunit. Forms a tight complex with proteins S10 and S14.

Binds the lower part of the 30S subunit head. Binds mRNA in the 70S ribosome, positioning it for translation. This is Small ribosomal subunit protein uS3 from Methylacidiphilum infernorum (isolate V4) (Methylokorus infernorum (strain V4)).